A 786-amino-acid polypeptide reads, in one-letter code: MVHFCGLLTLHREPVPLKSISVSVNIYEFVAGVSATLNYENEEKVPLEAFFVFPMDEDSAVYSFEALVDGKKIVAELQDKMKARTNYEKAISQGHQAFLLEGDSSSRDVFSCNVGNLQPGSKAAVTLKYVQELPLEADGALRFVLPAVLNPRYQFSGSSKDSCLNVKTPIVPVEDLPYTLSMVATIDSQHGIEKVQSNCPLSPTEYLGEDKTSAQVSLAAGHKFDRDVELLIYYNEVHTPSVVLEMGMPNMKPGHLMGDPSAMVSFYPNIPEDQPSNTCGEFIFLMDRSGSMQSPMSSQDTSQLRIQAAKETLILLLKSLPIGCYFNIYGFGSSYEACFPESVKYTQQTMEEALGRVKLMQADLGGTEILAPLQNIYRGPSIPGHPLQLFVFTDGEVTDTFSVIKEVRINRQKHRCFSFGIGEGTSTSLIKGIARASGGTSEFITGKDRMQSKALRTLKRSLQPVVEDVSLSWHLPPGLSAKMLSPEQTVIFRGQRLISYAQLTGRMPAAETTGEVCLKYTLQGKTFEDKVTFPLQPKPDVNLTIHRLAAKSLLQTKDMGLRETPASDKKDALNLSLESGVISSFTAFIAINKELNKPVQGPLAHRDVPRPILLGASAPLKIKCQSGFRKALHSDRPPSASQPRGELMCYKAKTFQMDDYSLCGLISHKDQHSPGFGENHLVQLIYHQNANGSWDLNEDLAKILGMSLEEIMAAQPAELVDSSGWATILAVIWLHSNGKDLKCEWELLERKAVAWMRAHAGSTMPSVVKAAITFLKSSVDPAIFAF.

A VIT domain is found at 1-131 (MVHFCGLLTL…KAAVTLKYVQ (131 aa)). A VWFA domain is found at 281-462 (EFIFLMDRSG…KALRTLKRSL (182 aa)).

Expressed at low level in many tissues. Not expressed in 80% of tumor cell lines tested.

In terms of biological role, may play a role in tumorigenesis as a tumor suppressor. Altered expression of this protein and disruption of the molecular pathway it is involved in, may contribute directly to or modify tumorigenesis. In Homo sapiens (Human), this protein is von Willebrand factor A domain-containing protein 5A (VWA5A).